We begin with the raw amino-acid sequence, 134 residues long: DNA-binding protein inhibitor ID-2 (134 aa).

2 positions are modified to phosphoserine: Ser14 and Ser25. Residues 23–75 form the bHLH domain; sequence SRSKTPVDDPMSLLYNMNDCYSKLKELVPSIPQNKKVTKMEILQHVIDYILDL. The segment at 30–83 is interaction with IFI204; that stretch reads DDPMSLLYNMNDCYSKLKELVPSIPQNKKVTKMEILQHVIDYILDLQIALDSHP. The short motif at 106–115 is the Nuclear export signal element; that stretch reads LNTDISILSL.

In terms of assembly, interacts with GATA4 and NKX2-5. Interacts with NR0B2. Interacts with CLOCK and BMAL1. Interacts with IFI204. Interacts with NEDD9/HEF1. Interacts with ASB4; this interaction promotes ID2 proteasomal degradation. In terms of processing, polyubiquitinated; which is favored by Ifi204 and leads to proteasomal degradation. Ubiquitinated in a ASB4-depedent manner, leading to proteasomal degradation. Post-translationally, phosphorylated in vitro by CDK1, PKA and PKC.

Its subcellular location is the cytoplasm. The protein resides in the nucleus. In terms of biological role, transcriptional regulator (lacking a basic DNA binding domain) which negatively regulates the basic helix-loop-helix (bHLH) transcription factors by forming heterodimers and inhibiting their DNA binding and transcriptional activity. Implicated in regulating a variety of cellular processes, including cellular growth, senescence, differentiation, apoptosis, angiogenesis, and neoplastic transformation. Inhibits skeletal muscle and cardiac myocyte differentiation. Regulates the circadian clock by repressing the transcriptional activator activity of the CLOCK-BMAL1 heterodimer. Restricts the CLOCK and BMAL1 localization to the cytoplasm. Plays a role in both the input and output pathways of the circadian clock: in the input component, is involved in modulating the magnitude of photic entrainment and in the output component, contributes to the regulation of a variety of liver clock-controlled genes involved in lipid metabolism. In Mus musculus (Mouse), this protein is DNA-binding protein inhibitor ID-2 (Id2).